The primary structure comprises 359 residues: N-acetylhexosamine 1-kinase (359 aa).

A Protein kinase domain is found at 21 to 359 (VTGIEPYGDG…IVADIMEAAR (339 aa)).

It belongs to the protein kinase superfamily. It depends on Mg(2+) as a cofactor.

The catalysed reaction is N-acetyl-D-hexosamine + ATP = N-acetyl-alpha-D-hexosamine 1-phosphate + ADP + H(+). Phosphorylates both N-acetylglucosamine (GlcNAc) and N-acetylgalactosamine (GalNAc) at similar rates. Involved in the lacto-N-biose I/galacto-N-biose (LNB/GNB) degradation pathway, which is important for host intestinal colonization by bifidobacteria. Also accepts GTP and ITP as phosphate donors. In vitro, can phosphorylate several GlcNAc and GalNAc derivatives. The sequence is that of N-acetylhexosamine 1-kinase (nahK) from Bifidobacterium longum subsp. longum (strain ATCC 15707 / DSM 20219 / JCM 1217 / NCTC 11818 / E194b).